The chain runs to 428 residues: Enolase (428 aa).

Gln-163 is a binding site for (2R)-2-phosphoglycerate. Glu-205 (proton donor) is an active-site residue. Mg(2+) is bound by residues Asp-243, Glu-286, and Asp-313. (2R)-2-phosphoglycerate is bound by residues Lys-338, Arg-367, Ser-368, and Lys-389. Lys-338 functions as the Proton acceptor in the catalytic mechanism.

This sequence belongs to the enolase family. Requires Mg(2+) as cofactor.

It localises to the cytoplasm. Its subcellular location is the secreted. The protein resides in the cell surface. The catalysed reaction is (2R)-2-phosphoglycerate = phosphoenolpyruvate + H2O. The protein operates within carbohydrate degradation; glycolysis; pyruvate from D-glyceraldehyde 3-phosphate: step 4/5. Its function is as follows. Catalyzes the reversible conversion of 2-phosphoglycerate (2-PG) into phosphoenolpyruvate (PEP). It is essential for the degradation of carbohydrates via glycolysis. In Polaromonas naphthalenivorans (strain CJ2), this protein is Enolase.